The sequence spans 319 residues: tRNA-cytidine(32) 2-sulfurtransferase (319 aa).

Positions 49 to 54 (SGGKDS) match the PP-loop motif motif. 3 residues coordinate [4Fe-4S] cluster: Cys-124, Cys-127, and Cys-215. A disordered region spans residues 276–319 (DGDTAFDKEEFRDPAPDADDVEDAPKKRTISILDSRGKESGCGA). Composition is skewed to basic and acidic residues over residues 280 to 290 (AFDKEEFRDPA) and 310 to 319 (SRGKESGCGA).

Belongs to the TtcA family. In terms of assembly, homodimer. Requires Mg(2+) as cofactor. It depends on [4Fe-4S] cluster as a cofactor.

The protein resides in the cytoplasm. The enzyme catalyses cytidine(32) in tRNA + S-sulfanyl-L-cysteinyl-[cysteine desulfurase] + AH2 + ATP = 2-thiocytidine(32) in tRNA + L-cysteinyl-[cysteine desulfurase] + A + AMP + diphosphate + H(+). Its pathway is tRNA modification. Catalyzes the ATP-dependent 2-thiolation of cytidine in position 32 of tRNA, to form 2-thiocytidine (s(2)C32). The sulfur atoms are provided by the cysteine/cysteine desulfurase (IscS) system. In Chromobacterium violaceum (strain ATCC 12472 / DSM 30191 / JCM 1249 / CCUG 213 / NBRC 12614 / NCIMB 9131 / NCTC 9757 / MK), this protein is tRNA-cytidine(32) 2-sulfurtransferase.